We begin with the raw amino-acid sequence, 30 residues long: PRRRTRRASRPVRRRRPRRVSRRRRARRRR.

Residues Pro-1–Arg-30 are disordered.

Testis.

The protein resides in the nucleus. It is found in the chromosome. In terms of biological role, protamines substitute for histones in the chromatin of sperm during the haploid phase of spermatogenesis. They compact sperm DNA into a highly condensed, stable and inactive complex. The protein is Protamine-YII of Clupea harengus (Atlantic herring).